A 403-amino-acid polypeptide reads, in one-letter code: Phosphoglycerate kinase (403 aa).

Substrate-binding positions include 21 to 23, Arg-37, 60 to 63, Arg-125, and Arg-158; these read DFN and HLGR. ATP contacts are provided by residues Lys-209, Glu-332, and 359-362; that span reads GGDS.

Belongs to the phosphoglycerate kinase family. In terms of assembly, monomer.

The protein localises to the cytoplasm. The enzyme catalyses (2R)-3-phosphoglycerate + ATP = (2R)-3-phospho-glyceroyl phosphate + ADP. The protein operates within carbohydrate degradation; glycolysis; pyruvate from D-glyceraldehyde 3-phosphate: step 2/5. The chain is Phosphoglycerate kinase from Koribacter versatilis (strain Ellin345).